The following is a 522-amino-acid chain: DEP domain-containing protein 7 (522 aa).

Residues 46 to 138 (LYTQVEVKKR…SSCSLYRFLN (93 aa)) form the DEP domain.

This sequence belongs to the DEPDC7 family.

This Xenopus laevis (African clawed frog) protein is DEP domain-containing protein 7 (depdc7).